A 708-amino-acid chain; its full sequence is Leukotoxin translocation ATP-binding protein LktB (708 aa).

The 126-residue stretch at 1 to 126 (MEANHQRNDL…ACYQGQLILV (126 aa)) folds into the Peptidase C39 domain. The ABC transmembrane type-1 domain maps to 155–437 (FLETLIVSIF…LAQLWQDFQQ (283 aa)). Helical transmembrane passes span 159-179 (LIVSIFLQIFALITPLFFQVV), 192-212 (LNIITVALAIVIIFEIVLSGL), 270-290 (ALTSVLDLLFSFIFFAVMWYY), 296-316 (LVILGSLPCYILWSIFISPIL), and 389-409 (VMVINLWLGAHLVISGDLSIG). The ABC transporter domain maps to 469 to 704 (ISFKNIRFRY…SNGLYSYLHQ (236 aa)). Position 503-510 (503-510 (GRSGSGKS)) interacts with ATP.

The protein belongs to the ABC transporter superfamily. Protein-1 exporter (TC 3.A.1.109) family. Homodimer.

Its subcellular location is the cell inner membrane. The enzyme catalyses ATP + H2O + proteinSide 1 = ADP + phosphate + proteinSide 2.. In terms of biological role, part of the ABC transporter complex LktBD involved in leukotoxin export. Transmembrane domains (TMD) form a pore in the inner membrane and the ATP-binding domain (NBD) is responsible for energy generation. The protein is Leukotoxin translocation ATP-binding protein LktB (lktB) of Mannheimia haemolytica (Pasteurella haemolytica).